A 1199-amino-acid polypeptide reads, in one-letter code: DNA-directed RNA polymerase subunit beta (1199 aa).

A disordered region spans residues 1177 to 1199 (EQEEKKAKEAEQETAEKEETKTE).

It belongs to the RNA polymerase beta chain family. As to quaternary structure, the RNAP catalytic core consists of 2 alpha, 1 beta, 1 beta' and 1 omega subunit. When a sigma factor is associated with the core the holoenzyme is formed, which can initiate transcription.

It carries out the reaction RNA(n) + a ribonucleoside 5'-triphosphate = RNA(n+1) + diphosphate. In terms of biological role, DNA-dependent RNA polymerase catalyzes the transcription of DNA into RNA using the four ribonucleoside triphosphates as substrates. This is DNA-directed RNA polymerase subunit beta from Ligilactobacillus salivarius (strain UCC118) (Lactobacillus salivarius).